Here is a 2602-residue protein sequence, read N- to C-terminus: Filamin-B (2602 aa).

The interval 1–239 is actin-binding; that stretch reads MPVTEKDLAE…VMTYLSQFPK (239 aa). Calponin-homology (CH) domains are found at residues 16–122 and 139–242; these read KIQQ…LHYS and QTPK…KAKL. Thr-216 carries the phosphothreonine modification. The interval 244 to 267 is disordered; the sequence is PGAPLKPKLNPKKARAYGRGIEPT. Filamin repeat units follow at residues 249–347, 349–446, 447–543, 544–636, 640–736, 737–839, 840–938, 939–1034, 1035–1127, 1128–1222, 1223–1322, 1323–1415, 1416–1511, 1512–1608, and 1609–1704; these read KPKL…EVNV, KAQG…GVQI, GEAC…EVQV, GPEA…MAFI, TGDY…RVNI, GQGS…RVKV, DPSH…TVGV, AAPL…TVEA, SLPP…KADI, EMPF…WVKV, EPAI…KVAV, TEGC…RVPS, KDVV…KVKV, LPTY…RIRA, and TQTG…TVMA. At Thr-519 the chain carries Phosphothreonine. Lys-681 is modified (N6-acetyllysine). Position 730 is a phosphoserine (Ser-730). Basic and acidic residues predominate over residues 837–850; that stretch reads VKVDPSHDASKVKA. The segment at 837–862 is disordered; sequence VKVDPSHDASKVKAEGPGLSKAGVEN. Residues Ser-886, Ser-932, Ser-983, and Ser-1028 each carry the phosphoserine modification. The residue at position 1307 (Thr-1307) is a Phosphothreonine. Position 1316 is a phosphoserine (Ser-1316). Phosphoserine is present on residues Ser-1433, Ser-1505, and Ser-1602. The interval 1705 to 1728 is hinge 1; sequence TDGEVTAMEEAPVNACPPGFRPWV. Filamin repeat units follow at residues 1729–1813, 1816–1908, 1919–1994, 1997–2089, 2091–2185, 2188–2280, 2282–2375, and 2379–2471; these read TEEA…SPLQ, VNYP…TAKI, KLGS…SIMV, SEIG…TVKI, GEGR…QFTV, LGEG…LVPV, APSD…KVRV, and GQAG…KAKV. An N6-acetyllysine modification is found at Lys-1780. Ser-2083 and Ser-2113 each carry phosphoserine. Phosphoserine occurs at positions 2369 and 2465. A Glycyl lysine isopeptide (Lys-Gly) (interchain with G-Cter in ISG15) cross-link involves residue Lys-2468. The segment at 2472 to 2506 is hinge 2; sequence TGQRLVSPGSANETSSILVESVTRSSTETCYSAIP. The segment at 2472 to 2602 is self-association site, tail; sequence TGQRLVSPGS…PGSPFHVTVP (131 aa). Phosphoserine is present on residues Ser-2478, Ser-2481, and Ser-2492. The Filamin 24 repeat unit spans residues 2507–2601; the sequence is KSSSDASKVT…IPGSPFHVTV (95 aa). N6-succinyllysine occurs at positions 2518 and 2524. N6-acetyllysine is present on Lys-2576.

This sequence belongs to the filamin family. In terms of assembly, homodimer. Interacts with FLNA, FLNC, INPPL1, ITGB1A, ITGB1D, ITGB3, ITGB6, MYOT, MYOZ1, PSEN1 and PSEN2. Interacts with MICALL2. Interacts with RFLNA and RFLNB. Interacts with ASB2 isoform 1; the interaction targets FLNB for proteasomal degradation. Post-translationally, ISGylation prevents ability to interact with the upstream activators of the JNK cascade and inhibits IFNA-induced JNK signaling. In terms of processing, ubiquitination by a SCF-like complex containing ASB2 isoform 1 leads to proteasomal degradation which promotes muscle differentiation. As to expression, expressed in hippocampus, cortex, cerebellar Purkinje cells and granule cell layers.

The protein localises to the cytoplasm. The protein resides in the cell cortex. Its subcellular location is the cytoskeleton. It is found in the stress fiber. It localises to the myofibril. The protein localises to the sarcomere. The protein resides in the z line. Its function is as follows. Connects cell membrane constituents to the actin cytoskeleton. May promote orthogonal branching of actin filaments and links actin filaments to membrane glycoproteins. Anchors various transmembrane proteins to the actin cytoskeleton. This chain is Filamin-B (Flnb), found in Mus musculus (Mouse).